The sequence spans 160 residues: MNIIGIDPSLNSTGWAILSVNDNNYNEIRLVNNGSILTSNKKTIGERLNKIYSELLNILNSYKVDTASMEEIFINKNPKSSTLLCYARGILLLTLDVACIPLFEYSANRVKKSITGNGHAKKEQVCFMIENILNIKCYGTYDISDAIAVAICHIYSIKAF.

Catalysis depends on residues Asp7, Glu70, and Asp142. Mg(2+) is bound by residues Asp7, Glu70, and Asp142.

It belongs to the RuvC family. Homodimer which binds Holliday junction (HJ) DNA. The HJ becomes 2-fold symmetrical on binding to RuvC with unstacked arms; it has a different conformation from HJ DNA in complex with RuvA. In the full resolvosome a probable DNA-RuvA(4)-RuvB(12)-RuvC(2) complex forms which resolves the HJ. The cofactor is Mg(2+).

It is found in the cytoplasm. It carries out the reaction Endonucleolytic cleavage at a junction such as a reciprocal single-stranded crossover between two homologous DNA duplexes (Holliday junction).. Its function is as follows. The RuvA-RuvB-RuvC complex processes Holliday junction (HJ) DNA during genetic recombination and DNA repair. Endonuclease that resolves HJ intermediates. Cleaves cruciform DNA by making single-stranded nicks across the HJ at symmetrical positions within the homologous arms, yielding a 5'-phosphate and a 3'-hydroxyl group; requires a central core of homology in the junction. The consensus cleavage sequence is 5'-(A/T)TT(C/G)-3'. Cleavage occurs on the 3'-side of the TT dinucleotide at the point of strand exchange. HJ branch migration catalyzed by RuvA-RuvB allows RuvC to scan DNA until it finds its consensus sequence, where it cleaves and resolves the cruciform DNA. This chain is Crossover junction endodeoxyribonuclease RuvC, found in Ehrlichia ruminantium (strain Gardel).